Reading from the N-terminus, the 246-residue chain is MFFAVITLFPEMFEAITAYGISGRAAKRDIVQVTCINPRDFAEGNYRRVDERPFGGGPGMVMMAEPLAKAINHAKQLASQAGCVHVPVVYMSPQGKTLNEQAVQQFVDYDGLIVLCGRYEGVDERLIQHYVDQEWSIGDYVLSGGELPAMVLLDSIIRRLPNVMSDEQSAIQDSFVDGLLDCPQYTKPDQFEGLDVPEILKSGHHANIEKWRFLQRYQRTLERRPELIEQVTLTKQQKKWLSDEQG.

S-adenosyl-L-methionine-binding positions include glycine 117 and 137 to 142; that span reads IGDYVL.

It belongs to the RNA methyltransferase TrmD family. As to quaternary structure, homodimer.

The protein localises to the cytoplasm. It catalyses the reaction guanosine(37) in tRNA + S-adenosyl-L-methionine = N(1)-methylguanosine(37) in tRNA + S-adenosyl-L-homocysteine + H(+). Specifically methylates guanosine-37 in various tRNAs. The polypeptide is tRNA (guanine-N(1)-)-methyltransferase (Acinetobacter baumannii (strain ACICU)).